We begin with the raw amino-acid sequence, 100 residues long: Small ribosomal subunit protein uS14c (100 aa).

The protein belongs to the universal ribosomal protein uS14 family. Part of the 30S ribosomal subunit.

The protein localises to the plastid. It localises to the chloroplast. Binds 16S rRNA, required for the assembly of 30S particles. This chain is Small ribosomal subunit protein uS14c, found in Fagopyrum esculentum subsp. ancestrale (Wild buckwheat).